We begin with the raw amino-acid sequence, 293 residues long: ATP synthase gamma chain (293 aa).

This sequence belongs to the ATPase gamma chain family. In terms of assembly, F-type ATPases have 2 components, CF(1) - the catalytic core - and CF(0) - the membrane proton channel. CF(1) has five subunits: alpha(3), beta(3), gamma(1), delta(1), epsilon(1). CF(0) has three main subunits: a, b and c.

The protein localises to the cell inner membrane. Functionally, produces ATP from ADP in the presence of a proton gradient across the membrane. The gamma chain is believed to be important in regulating ATPase activity and the flow of protons through the CF(0) complex. The sequence is that of ATP synthase gamma chain from Leptothrix cholodnii (strain ATCC 51168 / LMG 8142 / SP-6) (Leptothrix discophora (strain SP-6)).